The chain runs to 476 residues: Glycogen synthase (476 aa).

Lys-15 contributes to the ADP-alpha-D-glucose binding site.

This sequence belongs to the glycosyltransferase 1 family. Bacterial/plant glycogen synthase subfamily.

The catalysed reaction is [(1-&gt;4)-alpha-D-glucosyl](n) + ADP-alpha-D-glucose = [(1-&gt;4)-alpha-D-glucosyl](n+1) + ADP + H(+). Its pathway is glycan biosynthesis; glycogen biosynthesis. Its function is as follows. Synthesizes alpha-1,4-glucan chains using ADP-glucose. This chain is Glycogen synthase, found in Bacillus anthracis.